The primary structure comprises 183 residues: Adenine phosphoribosyltransferase (183 aa).

This sequence belongs to the purine/pyrimidine phosphoribosyltransferase family. In terms of assembly, homodimer.

It localises to the cytoplasm. It carries out the reaction AMP + diphosphate = 5-phospho-alpha-D-ribose 1-diphosphate + adenine. The protein operates within purine metabolism; AMP biosynthesis via salvage pathway; AMP from adenine: step 1/1. Its function is as follows. Catalyzes a salvage reaction resulting in the formation of AMP, that is energically less costly than de novo synthesis. This Salmonella arizonae (strain ATCC BAA-731 / CDC346-86 / RSK2980) protein is Adenine phosphoribosyltransferase.